A 75-amino-acid chain; its full sequence is Cruzioseptin-6 (75 aa).

Residues 1 to 22 (MAYLKKSLFLVLFLGLVSLSIC) form the signal peptide. The propeptide occupies 23–43 (EEEKREEENEEEQEDDDQSEE). The segment at 24-44 (EEKREEENEEEQEDDDQSEEK) is disordered. Positions 30–41 (ENEEEQEDDDQS) are enriched in acidic residues.

As to expression, expressed by the skin glands.

The protein localises to the secreted. Functionally, has antimicrobial activity. This is Cruzioseptin-6 from Cruziohyla calcarifer (Splendid leaf frog).